The following is a 158-amino-acid chain: Ribonuclease H (158 aa).

In terms of domain architecture, RNase H type-1 spans 5-146 (MRKQIEIFTD…CDQLAKQGAE (142 aa)). Mg(2+) contacts are provided by aspartate 14, glutamate 52, aspartate 74, and aspartate 138.

Belongs to the RNase H family. Monomer. It depends on Mg(2+) as a cofactor.

The protein localises to the cytoplasm. The enzyme catalyses Endonucleolytic cleavage to 5'-phosphomonoester.. Endonuclease that specifically degrades the RNA of RNA-DNA hybrids. This chain is Ribonuclease H, found in Mannheimia succiniciproducens (strain KCTC 0769BP / MBEL55E).